Here is a 796-residue protein sequence, read N- to C-terminus: MSSSSIVTSLLRPTTAADGVLPRQMAQVNSSCNIWRSKAKVGGINYFNPGNIKCVEEVHKSRQVVVAALKSLEYETEKPTNQDVVSEKMRVLSERIETMLQNMDEGEISISPYDTAWVALVEDTDGRPQFPTSLEWISNNQLADGSWGDRKFVIYDRILNTLACVVALTTWNMHPHKCNRGLRFIRDNMEKLENENEELMPIGFEVVFPSLIEAAQKLGIEIPHIDSPCIKKIQAMRDFKLKRIPMELLHKKPTSLLHSLEGMQGLVWEKLLDFRSDGSFLCSPSSTAYALQHTKDELCLQYLLKAVKKFNGGVPNVYPVDMFEHLWCVDRLQRLGICRYFRVQIKEMLDYVYKYWTDKGICWARNTNVQDVDDTAMGFRLLRMHGYDVSTDVFKQFEKAGEFCCFPGQSTHAITGMYNVYRTSQIMFDGEDILADAKNYSATFLHQKRLANELVDKWIITKDLPGEVGYALDVPFFASLPRLEARFFLEQYGGDDDVWIGKTLYRMPYVNSDTYLELAKLDYKKCQAVHQLEWKSIQKWYRDCKLGEFGLGEKRLLLAYFLAASTAFEPEKKGERLAWAKTAFLVETIASQQLSHEQKREFADEFEHGSSLNMENGGSYKTRTRLVEILSNTVSQLSFETLVAEGRDIKQQLSNTWQKWLKTWEEGGNLGEAEAQLLLQTLHLSSGLDESSFSHPKYHQLLEVTCKVCNQLRLFQNRKAHDAQGGISDLVIGTTFQIEASMQELVKLVFTKSSEDLDSITKQSFFAIARSFYYTAYCDAGAINSHIYKVLFENID.

Residues 1–23 (MSSSSIVTSLLRPTTAADGVLPR) constitute a chloroplast transit peptide. A substrate-binding site is contributed by lysine 240. The Mg(2+) site is built by aspartate 371 and aspartate 373. Positions 371–374 (DVDD) match the DXDD motif motif. Lysine 457 is a substrate binding site.

The protein belongs to the terpene synthase family. Tpsc subfamily. Mg(2+) is required as a cofactor. In terms of tissue distribution, highly expressed in leaves, and, at low levels, in stems, but barely in roots and flowers.

It localises to the plastid. The protein resides in the chloroplast. It carries out the reaction (2E,6E,10E)-geranylgeranyl diphosphate = ent-copalyl diphosphate. The protein operates within secondary metabolite biosynthesis; terpenoid biosynthesis. Functionally, involved in the biosynthesis of ent-kaurene diterpenoids natural products such as oridonin, miltiradiene, eriocalyxin B and nezukol, known to exhibit antitumor, anti-inflammatory and antibacterial activities. Catalyzes the conversion of (2E,6E,10E)-geranylgeranyl diphosphate (GGPP) to ent-copalyl diphosphate (ent-CPP). The protein is Ent-copalyl diphosphate synthase 4 of Isodon rubescens (Rabdosia rubescens).